A 147-amino-acid polypeptide reads, in one-letter code: Protein MioC (147 aa).

Positions 4–143 (ITLISGSTLG…PAEEWLGSWV (140 aa)) constitute a Flavodoxin-like domain.

Belongs to the flavodoxin family. MioC subfamily. As to quaternary structure, homodimer. It depends on FMN as a cofactor.

Probable electron transporter required for biotin synthase activity. This Escherichia coli (strain K12) protein is Protein MioC (mioC).